A 373-amino-acid polypeptide reads, in one-letter code: Flagellar P-ring protein (373 aa).

Residues 1-26 (MKLFFRFLTLVAVLAMSLADVAPAWA) form the signal peptide.

It belongs to the FlgI family. As to quaternary structure, the basal body constitutes a major portion of the flagellar organelle and consists of four rings (L,P,S, and M) mounted on a central rod.

The protein resides in the periplasm. It is found in the bacterial flagellum basal body. In terms of biological role, assembles around the rod to form the L-ring and probably protects the motor/basal body from shearing forces during rotation. This chain is Flagellar P-ring protein, found in Rhizobium leguminosarum bv. trifolii (strain WSM2304).